Here is a 927-residue protein sequence, read N- to C-terminus: Protein translocase subunit SecA (927 aa).

Residues glutamine 86, 104 to 108 (GEGKT), and aspartate 494 contribute to the ATP site. The interval 853 to 927 (YTAPDEDGTP…GSKAKRGKRR (75 aa)) is disordered. Residues 860–879 (GTPHAEVEAVDPGARERTSE) show a composition bias toward basic and acidic residues. Positions 907–927 (RAKRRGASARSGSKAKRGKRR) are enriched in basic residues.

It belongs to the SecA family. As to quaternary structure, monomer and homodimer. Part of the essential Sec protein translocation apparatus which comprises SecA, SecYEG and auxiliary proteins SecDF. Other proteins may also be involved.

Its subcellular location is the cell membrane. It is found in the cytoplasm. It carries out the reaction ATP + H2O + cellular proteinSide 1 = ADP + phosphate + cellular proteinSide 2.. In terms of biological role, part of the Sec protein translocase complex. Interacts with the SecYEG preprotein conducting channel. Has a central role in coupling the hydrolysis of ATP to the transfer of proteins into and across the cell membrane, serving as an ATP-driven molecular motor driving the stepwise translocation of polypeptide chains across the membrane. This chain is Protein translocase subunit SecA, found in Kocuria rhizophila (strain ATCC 9341 / DSM 348 / NBRC 103217 / DC2201).